The sequence spans 40 residues: Dolichyl-diphosphooligosaccharide--protein glycosyltransferase subunit 4 (40 aa).

At 1–4 (MITD) the chain is on the lumenal side. A helical transmembrane segment spans residues 5-25 (VQLAIFSNVLGVFLFLLVVAY). Topologically, residues 26-40 (HYINANTGKIGPKAK) are cytoplasmic.

This sequence belongs to the OST4 family. As to quaternary structure, component of the oligosaccharyltransferase (OST) complex.

The protein localises to the endoplasmic reticulum membrane. Subunit of the oligosaccharyl transferase (OST) complex that catalyzes the initial transfer of a defined glycan (Glc(3)Man(9)GlcNAc(2) in eukaryotes) from the lipid carrier dolichol-pyrophosphate to an asparagine residue within an Asn-X-Ser/Thr consensus motif in nascent polypeptide chains, the first step in protein N-glycosylation. N-glycosylation occurs cotranslationally and the complex associates with the Sec61 complex at the channel-forming translocon complex that mediates protein translocation across the endoplasmic reticulum (ER). All subunits are required for a maximal enzyme activity. The protein is Dolichyl-diphosphooligosaccharide--protein glycosyltransferase subunit 4 of Drosophila willistoni (Fruit fly).